Consider the following 423-residue polypeptide: Major royal jelly protein 9 (423 aa).

Residues 1 to 20 (MSFNIWWLILYFSIVCQAKA) form the signal peptide. N-linked (GlcNAc...) asparagine glycosylation is found at Asn-110, Asn-118, Asn-177, Asn-196, and Asn-345.

The protein belongs to the major royal jelly protein family. Expressed at very low levels in the hypopharyngeal glands of adult worker bees (at protein level); expression peaks at 12 days post eclosion. Secreted into bee venom in the sting apparatus (at protein level). Expressed in the brains of adult worker bees peaking at 12 days post eclosion (at protein level). Expressed in the spermatheca of adult queen bees (at protein level); expression levels are higher in mated queens than in virgin queens. Along with Mrjp8 expressed at very low levels in the head of worker bees compared to other major royal jelly proteins.

The protein localises to the secreted. In terms of biological role, component of bee sting venom. Component of royal jelly, a substance produced in the hypopharyngeal gland containing proteins, free amino acids, fatty acids, sugars and other nutrients, which is fed to developing larvae by worker nurse bees; may be present only at trace levels. All larvae are fed some royal jelly (also known as worker jelly) early in their development but it forms the principal source of nutrition for larvae destined to become queen bees. Produced in the spermatheca of adult queen bees, along with other major royal jelly proteins, where it may act as a nutrient supply for sperm stored by mated queens, or be involved in energy metabolism. The polypeptide is Major royal jelly protein 9 (Apis mellifera (Honeybee)).